We begin with the raw amino-acid sequence, 118 residues long: Large ribosomal subunit protein bL20 (118 aa).

It belongs to the bacterial ribosomal protein bL20 family.

In terms of biological role, binds directly to 23S ribosomal RNA and is necessary for the in vitro assembly process of the 50S ribosomal subunit. It is not involved in the protein synthesizing functions of that subunit. In Pseudoalteromonas atlantica (strain T6c / ATCC BAA-1087), this protein is Large ribosomal subunit protein bL20.